The sequence spans 339 residues: MVREEVAGSTQTLQWKCVESRVDSKRLYYGRFILSPLRKGQADTVGIALRRALLGEIEGTCITRAKFGSVPHEYSTIAGIEESVQEILLNLKEIVLRSNLYGVRDASICVKGPRYITAQDIILPPSVEIVDTAQPIANLTEPIDFCIDLQIKRDRGYQTELRKNYQDGSYPIDAESMPVRNVNYSIFSCGNGNEKHEILFLEIWTNGSLTPKEALYEASRNLIDLFLPFLHAEEEGTSFEENKNRFTPPLFTFQKRLTNLKKNKKGIPLNCIFIDQLELTSRTYNCLKRANIHTLLDLLSKTEEDLLRIDSFRMEDRKHIWDTLEKHLPIDLLKNKLSF.

The tract at residues Met-1–Glu-233 is alpha N-terminal domain (alpha-NTD). The alpha C-terminal domain (alpha-CTD) stretch occupies residues Lys-264–Phe-339.

It belongs to the RNA polymerase alpha chain family. As to quaternary structure, in plastids the minimal PEP RNA polymerase catalytic core is composed of four subunits: alpha, beta, beta', and beta''. When a (nuclear-encoded) sigma factor is associated with the core the holoenzyme is formed, which can initiate transcription.

The protein resides in the plastid. It is found in the chloroplast. The enzyme catalyses RNA(n) + a ribonucleoside 5'-triphosphate = RNA(n+1) + diphosphate. DNA-dependent RNA polymerase catalyzes the transcription of DNA into RNA using the four ribonucleoside triphosphates as substrates. This chain is DNA-directed RNA polymerase subunit alpha, found in Elymus hystrix (Eastern bottlebrush grass).